We begin with the raw amino-acid sequence, 332 residues long: 30 kDa heat shock protein (332 aa).

Residues 1–34 (MNDTLSSFLNRNEALGLNPPHGLDMHITKRGSDW) are Extracellular-facing. The chain crosses the membrane as a helical span at residues 35 to 55 (LWAVFAVFGFILLCYVVMFFI). Over 56-65 (AENKGSRLTR) the chain is Cytoplasmic. The helical transmembrane segment at 66 to 86 (YALAPAFLITFFEFFAFFTYA) threads the bilayer. Residues 87-121 (SDLGWTGVQAEFNHVKVSKSITGEVPGIRQIFYSK) are Extracellular-facing. A helical transmembrane segment spans residues 122–142 (YIAWFLSWPCLLFLIELAAST). The Cytoplasmic portion of the chain corresponds to 143 to 157 (TGENDDISALDMVHS). A helical transmembrane segment spans residues 158–178 (LLIQIVGTLFWVVSLLVGSLI). Residues 179 to 181 (KST) lie on the Extracellular side of the membrane. Residues 182-202 (YKWGYYTIGAVAMLVTQGVIC) traverse the membrane as a helical segment. Residues 203-215 (QRQFFNLKTRGFN) are Cytoplasmic-facing. A helical transmembrane segment spans residues 216–236 (ALMLCTCMVIVWLYFICWGLS). Topologically, residues 237–248 (DGGNRIQPDGEA) are extracellular. A helical transmembrane segment spans residues 249–269 (IFYGVLDLCVFAIYPCYLLIA). Topologically, residues 270–332 (VSRDGKLPRL…EAEQAVEDTA (63 aa)) are cytoplasmic. Positions 290–332 (ATDDVEDAAPETKEAVPESPRASGETAIHEPEPEAEQAVEDTA) are disordered. Ser308 is subject to Phosphoserine. Over residues 322-332 (PEAEQAVEDTA) the composition is skewed to acidic residues. Thr331 bears the Phosphothreonine mark.

Belongs to the archaeal/bacterial/fungal opsin family.

It is found in the membrane. Its function is as follows. Probably cooperates with other heat shock proteins in the translocation of polypeptides through membranes. It may counteract the altering effect of heat shock on the plasma membrane. The protein is 30 kDa heat shock protein (HSP30) of Saccharomyces cerevisiae (strain ATCC 204508 / S288c) (Baker's yeast).